The following is a 231-amino-acid chain: Putative transglycosylase H16_A0665 (231 aa).

The chain crosses the membrane as a helical span at residues F8–L28.

The protein belongs to the glycosyltransferase 51 family.

The protein localises to the secreted. It is found in the membrane. It participates in cell wall biogenesis; peptidoglycan biosynthesis. In terms of biological role, cell wall formation. The protein is Putative transglycosylase H16_A0665 of Cupriavidus necator (strain ATCC 17699 / DSM 428 / KCTC 22496 / NCIMB 10442 / H16 / Stanier 337) (Ralstonia eutropha).